A 498-amino-acid chain; its full sequence is Meiosis-specific nuclear structural protein 1 (498 aa).

Coiled-coil stretches lie at residues 45–211 (KSEE…FLKE), 270–348 (LAFA…QRLE), and 385–450 (DDRI…RQKI).

The protein belongs to the MNS1 family.

It is found in the nucleus. The protein localises to the cytoplasm. The protein resides in the cytoskeleton. It localises to the cilium axoneme. Its subcellular location is the flagellum axoneme. Microtubule inner protein (MIP) part of the dynein-decorated doublet microtubules (DMTs) in cilia axoneme, which is required for motile cilia beating. May play a role in the control of meiotic division and germ cell differentiation through regulation of pairing and recombination during meiosis. Required for sperm flagella assembly. May play a role in the assembly and function of the outer dynein arm-docking complex (ODA-DC). ODA-DC mediates outer dynein arms (ODA) binding onto the axonemal doublet microtubules. This Xenopus tropicalis (Western clawed frog) protein is Meiosis-specific nuclear structural protein 1 (mns1).